The following is a 1372-amino-acid chain: DNA-directed RNA polymerase subunit beta (1372 aa).

The protein belongs to the RNA polymerase beta chain family. In terms of assembly, the RNAP catalytic core consists of 2 alpha, 1 beta, 1 beta' and 1 omega subunit. When a sigma factor is associated with the core the holoenzyme is formed, which can initiate transcription.

The catalysed reaction is RNA(n) + a ribonucleoside 5'-triphosphate = RNA(n+1) + diphosphate. Functionally, DNA-dependent RNA polymerase catalyzes the transcription of DNA into RNA using the four ribonucleoside triphosphates as substrates. This chain is DNA-directed RNA polymerase subunit beta, found in Psychrobacter arcticus (strain DSM 17307 / VKM B-2377 / 273-4).